The sequence spans 488 residues: PTS system mannitol-specific EIICB component (488 aa).

Residues 1–26 (MRKKLAKVKVHIQSLDSLLSSMTMPI) lie on the Cytoplasmic side of the membrane. A PTS EIIC type-2 domain is found at 15-362 (LDSLLSSMTM…LSLTRKKQLK (348 aa)). Residues 27-48 (IGIFIAWGLLASFFIPSGWTPD) form a helical membrane-spanning segment. The Extracellular segment spans residues 49-52 (KNLA). A helical transmembrane segment spans residues 53-73 (LMVGIGIQYVIPTIIXFFGGK). Residues 74–147 (KIYEIRGGVI…SGFEMLVNNF (74 aa)) are Cytoplasmic-facing. Residues 148–169 (YLGFLGFALIFPSFYLSIYLIG) traverse the membrane as a helical segment. Residues 170–178 (YIQLGLKLL) lie on the Extracellular side of the membrane. A helical membrane pass occupies residues 179 to 199 (VEIMQQYKLYPIAAIVIEPAK). The Cytoplasmic portion of the chain corresponds to 200 to 289 (VLFLNNAINH…VLLKPVLILA (90 aa)). The helical transmembrane segment at 290 to 309 (TIAVGVVGNGILQIFNAGTI) threads the bilayer. The Extracellular portion of the chain corresponds to 310-331 (APVSPGSVIAGFLQINKTPLDV). Residues 332–353 (AGYALALVLSAVTSLLISLLLL) form a helical membrane-spanning segment. Topologically, residues 354 to 488 (SLTRKKQLKT…IIEKIKNEKN (135 aa)) are cytoplasmic. Positions 397–488 (SQVTFVCDAG…IIEKIKNEKN (92 aa)) constitute a PTS EIIB type-2 domain. Cysteine 403 serves as the catalytic Phosphocysteine intermediate; for EIIB activity. Cysteine 403 is modified (phosphocysteine; by EIIA).

In terms of assembly, homodimer.

The protein resides in the cell membrane. It catalyses the reaction D-mannitol(out) + N(pros)-phospho-L-histidyl-[protein] = D-mannitol 1-phosphate(in) + L-histidyl-[protein]. Functionally, the phosphoenolpyruvate-dependent sugar phosphotransferase system (sugar PTS), a major carbohydrate active transport system, catalyzes the phosphorylation of incoming sugar substrates concomitantly with their translocation across the cell membrane. The enzyme II CmtAB PTS system is involved in D-mannitol transport. The sequence is that of PTS system mannitol-specific EIICB component (mtlA) from Mycoplasma pneumoniae (strain ATCC 29342 / M129 / Subtype 1) (Mycoplasmoides pneumoniae).